The chain runs to 226 residues: Staphylococcal superantigen-like 1 (226 aa).

The first 30 residues, 1 to 30 (MKFKAIAKASLALGMLATGVITSNVQSVQA), serve as a signal peptide directing secretion.

This sequence belongs to the staphylococcal/streptococcal toxin family. In terms of assembly, homodimer.

It localises to the secreted. Mediates virulence by proteolytically cleaving host proteins, including collagens types I and IV as well as human cytokines IL8, IL17A, and IFN-gamma. The chain is Staphylococcal superantigen-like 1 from Staphylococcus aureus (strain NCTC 8325 / PS 47).